Here is a 62-residue protein sequence, read N- to C-terminus: Small ribosomal subunit protein eS27 (62 aa).

Zn(2+) contacts are provided by Cys17, Cys20, Cys36, and Cys39. The C4-type zinc-finger motif lies at Cys17–Cys39.

Belongs to the eukaryotic ribosomal protein eS27 family. Part of the 30S ribosomal subunit. The cofactor is Zn(2+).

This chain is Small ribosomal subunit protein eS27, found in Methanoculleus marisnigri (strain ATCC 35101 / DSM 1498 / JR1).